The chain runs to 365 residues: Protein-glutamate methylesterase/protein-glutamine glutaminase 1 (365 aa).

Positions 4–121 (KVLVVDDSQF…SRDSVVLKKR (118 aa)) constitute a Response regulatory domain. A 4-aspartylphosphate modification is found at Asp-55. Residues 138–173 (AARSTTQPSGVRPSALGANLSSSRSPRPASSAPSAP) form a disordered region. Residues 158 to 172 (SSSRSPRPASSAPSA) show a composition bias toward low complexity. Positions 182–365 (KLVAIGASTG…QVWQRLVSDV (184 aa)) constitute a CheB-type methylesterase domain. Residues Ser-189, His-216, and Asp-310 contribute to the active site.

The protein belongs to the CheB family. In terms of processing, phosphorylated by CheA. Phosphorylation of the N-terminal regulatory domain activates the methylesterase activity.

It localises to the cytoplasm. The catalysed reaction is [protein]-L-glutamate 5-O-methyl ester + H2O = L-glutamyl-[protein] + methanol + H(+). The enzyme catalyses L-glutaminyl-[protein] + H2O = L-glutamyl-[protein] + NH4(+). In terms of biological role, involved in chemotaxis. Part of a chemotaxis signal transduction system that modulates chemotaxis in response to various stimuli. Catalyzes the demethylation of specific methylglutamate residues introduced into the chemoreceptors (methyl-accepting chemotaxis proteins or MCP) by CheR. Also mediates the irreversible deamidation of specific glutamine residues to glutamic acid. The protein is Protein-glutamate methylesterase/protein-glutamine glutaminase 1 of Saccharophagus degradans (strain 2-40 / ATCC 43961 / DSM 17024).